The primary structure comprises 581 residues: MANAPHGGVLKDLLVRDAALHDSLLQEARSLNDIFLTERQLCDLELILNGGFSPLEGFMNERDYTSVVETLRLAPYNGQKHGDVFPIPITLDVSQEDINTLGLKQGGRVALRDPRDDAALAILTVSDIYRPNKAIEAEKVMGADDIAHPSVAYLRNNVKEFYVGGKVQAIQAPTHFDYVPLRFTPAELRAHFHKLAWRKVVAFQTRNPMHRAHRELTVRAARQRRANVLIHPVVGLTKPGDVDHYTRVRAYQALMPSYPEGMAHLALLPLAMRMAGPREAVWHAVIRKNFGATHFIVGRDHAGPGKNSQGQDFYGPYDAQELVTQFKDELQIEMVPFQAMTYLPGSDEYQPVDEVPKGTPTADISGTELRKRLRTGASIPDWFSYTGVVKVLRESYPPRPQQGFTILLTGLHNSGKDTIARALQVTLQQQGSRSVSLLLGEELRSDLDPQIGRAITPEQKHINLERIGFVAGELTKAGAAVIAAPTAPYERSRQAFKKQVVGSGGGNYFLVHVATPLEWCEKVDRRGLYKAARAGEIKNLTGVDDVYEAPEDADLVCDLRNDTVPEIVHSIIMILESQNLV.

An N-terminal region spans residues 1-176 (MANAPHGGVL…VQAIQAPTHF (176 aa)). The catalytic stretch occupies residues 177 to 401 (DYVPLRFTPA…LRESYPPRPQ (225 aa)). Residue Q204 participates in sulfate binding. ATP is bound by residues 204–207 (QTRN) and 298–301 (GRDH). Residues T205, R206, and N207 contribute to the active site. R206 is a binding site for sulfate. A302 is a binding site for sulfate. ATP is bound at residue M340. The allosteric regulation domain; adenylyl-sulfate kinase-like stretch occupies residues 402 to 581 (QGFTILLTGL…IMILESQNLV (180 aa)). 3'-phosphoadenylyl sulfate contacts are provided by residues 441 to 444 (EELR), 486 to 487 (TA), and R526.

It in the N-terminal section; belongs to the sulfate adenylyltransferase family. In the C-terminal section; belongs to the APS kinase family. Homohexamer. Dimer of trimers.

The protein resides in the cytoplasm. It carries out the reaction sulfate + ATP + H(+) = adenosine 5'-phosphosulfate + diphosphate. Its pathway is sulfur metabolism; hydrogen sulfide biosynthesis; sulfite from sulfate: step 1/3. With respect to regulation, allosterically inhibited by 3'-phosphoadenosine 5'-phosphosulfate (PAPS). Catalyzes the first intracellular reaction of sulfate assimilation, forming adenosine-5'-phosphosulfate (APS) from inorganic sulfate and ATP. Plays an important role in sulfate activation as a component of the biosynthesis pathway of sulfur-containing amino acids. In Cryptococcus neoformans var. neoformans serotype D (strain B-3501A) (Filobasidiella neoformans), this protein is Sulfate adenylyltransferase.